Reading from the N-terminus, the 448-residue chain is MSKITFPKDFIWGSATAAYQIEGAYNEDGKGESIWDRFSHTPGNIADGHTGDVACDHYHRYEEDIKIMKEIGIKSYRFSISWPRIFPEGTGKLNQKGLDFYKRLTNLLLENGIMPAITLYHWDLPQKLQDKGGWKNRDTTDYFTEYSEVIFKNLGDIVPIWFTHNEPGVVSLLGHFLGIHAPGIKDLRTSLEVSHNLLLSHGKAVKLFREMNIDAQIGIALNLSYHYPASEKAEDIEAAELSFSLAGRWYLDPVLKGRYPENALKLYKKKGIELSFPEDDLKLISQPIDFIAFNNYSSEFIKYDPSSESGFSPANSILEKFEKTDMGWIIYPEGLYDLLMLLDRDYGKPNIVISENGAAFKDEIGSNGKIEDTKRIQYLKDYLTQAHRAIQDGVNLKAYYLWSLLDNFEWAYGYNKRFGIVHVNFDTLERKIKDSGYWYKEVIKNNGF.

Catalysis depends on Glu166, which acts as the Proton donor. Glu355 functions as the Nucleophile in the catalytic mechanism.

Belongs to the glycosyl hydrolase 1 family.

It catalyses the reaction Hydrolysis of terminal, non-reducing beta-D-glucosyl residues with release of beta-D-glucose.. It participates in glycan metabolism; cellulose degradation. The protein is Beta-glucosidase A (bglA) of Acetivibrio thermocellus (strain ATCC 27405 / DSM 1237 / JCM 9322 / NBRC 103400 / NCIMB 10682 / NRRL B-4536 / VPI 7372) (Clostridium thermocellum).